Here is a 390-residue protein sequence, read N- to C-terminus: Phosphoglycerate kinase (390 aa).

Residues 21–23, arginine 36, 59–62, arginine 112, and arginine 145 each bind substrate; these read DLN and HLGR. Residues lysine 196, glutamate 317, and 343–346 each bind ATP; that span reads GGDT.

This sequence belongs to the phosphoglycerate kinase family. As to quaternary structure, monomer.

The protein localises to the cytoplasm. The enzyme catalyses (2R)-3-phosphoglycerate + ATP = (2R)-3-phospho-glyceroyl phosphate + ADP. Its pathway is carbohydrate degradation; glycolysis; pyruvate from D-glyceraldehyde 3-phosphate: step 2/5. The polypeptide is Phosphoglycerate kinase (Cellvibrio japonicus (strain Ueda107) (Pseudomonas fluorescens subsp. cellulosa)).